The sequence spans 449 residues: MRSAAVLALLLCAGQVIALPVNSPMNKGDTEVMKCIVEVISDTLSKPSPMPVSKECFETLRGDERILSILRHQNLLKELQDLALQGAKERTHQQKKHSSYEDELSEVLEKPNDQAEPKEVTEEVSSKDAAEKRDDFKEVEKSDEDSDGDRPQASPGLGPGPKVEEDNQAPGEEEEAPSNAHPLASLPSPKYPGPQAKEDSEGPSQGPASREKGLSAEQGRQTEREEEEEKWEEAEAREKAVPEEESPPTAAFKPPPSLGNKETQRAAPGWPEDGAGKMGAEEAKPPEGKGEWAHSRQEEEEMARAPQVLFRGGKSGEPEQEEQLSKEWEDAKRWSKMDQLAKELTAEKRLEGEEEEEEDPDRSMRLSFRARGYGFRGPGLQLRRGWRPNSREDSVEAGLPLQVRGYPEEKKEEEGSANRRPEDQELESLSAIEAELEKVAHQLEELRRG.

Positions methionine 1 to alanine 18 are cleaved as a signal peptide. Cysteine 35 and cysteine 56 are oxidised to a cystine. A disordered region spans residues alanine 87 to alanine 431. Phosphoserine is present on serine 99. Over residues valine 107–glutamate 140 the composition is skewed to basic and acidic residues. Phosphoserine is present on serine 142. Serine 185 is a glycosylation site (O-linked (GalNAc...) serine). At tyrosine 191 the chain carries Phosphotyrosine. Serine 200 carries the post-translational modification Phosphoserine. Serine 204 is a glycosylation site (O-linked (GalNAc...) serine). Serine 215 is modified (phosphoserine). Positions glutamate 233–proline 242 are enriched in basic and acidic residues. O-linked (GalNAc...) threonine glycosylation occurs at threonine 249. Over residues glycine 279 to glutamine 297 the composition is skewed to basic and acidic residues. Serine 295 is modified (phosphoserine). Glycine 312 bears the Glycine amide mark. 3 positions are modified to phosphoserine: serine 315, serine 325, and serine 363. Residues glutamine 323–glutamate 351 are compositionally biased toward basic and acidic residues. Methionine 364 is modified (methionine sulfoxide). Phosphoserine occurs at positions 390, 394, 416, and 430. Residues tyrosine 406 to aspartate 423 are compositionally biased toward basic and acidic residues. Residue serine 416 is glycosylated (O-linked (Xyl...) (chondroitin sulfate) serine).

Belongs to the chromogranin/secretogranin protein family. In terms of assembly, self-interacts; self-assembly is promoted in vitro by chondroitin sulfate attachment which occurs at mildly acidic pH conditions. Interacts with SCG3. Interacts with ITPR1 in the secretory granules. In secretory granules, is attacked at both N- and C-terminal sides by proteolytic enzymes generating numerous peptides of various activities. Proteolytic processing can give rise to additional longer forms of catestatin peptides which display a less potent catecholamine release-inhibitory activity. In terms of processing, O-glycosylated; contains chondroitin sulfate (CS). CS attachment is pH-dependent, being observed at mildly acidic conditions of pH 5 but not at neutral pH, and promotes self-assembly in vitro. As to expression, highest concentration of GE-25 found in adrenal medulla with lower levels present in the pituitary, the intestinal mucosa and the pancreas. Also found in the brain.

It localises to the secreted. The protein localises to the cytoplasmic vesicle. The protein resides in the secretory vesicle. It is found in the neuronal dense core vesicle. Functionally, strongly inhibits glucose induced insulin release from the pancreas. Its function is as follows. Completely inhibits catecholamine release from chromaffin cells. In terms of biological role, has antibacterial activity against M.luteus. Not active against E.coli. Inhibits catecholamine release from chromaffin cells and noradrenergic neurons by acting as a non-competitive nicotinic cholinergic antagonist. Displays antibacterial activity against Gram-positive bacteria M.luteus and B.megaterium, and Gram-negative bacteria E.coli, and antifungal activity against a variety of filamentous fungi including A.fumigatus, N.hematococca, F.culmorum, F.oxyporum, T.mentagrophytes and several forms of Candida: C.albicans, C.tropicalis, C.glabrata and C.neoform. Can induce mast cell migration, degranulation and production of cytokines and chemokines. Functionally, has antibacterial activity against Gram-positive bacteria M.luteus, B.megaterium. Not active against Gram-positive bacteria B.cereus, B.subtilis, S.pyogenes, M.fortuitum, S.aureus and L.monocytogenes and against Gram-negative bacteria E.coli, E.cloacae, S.typhimurium, K.pneumoniae and P.aeruginosa. Possesses antifungal activity against N.crassa, A.fumigatus, A.brassicicola, N.hematococca, F.culmorum and F.oxyporum and against the yeast S.cerevisiae and C.albicans. Inactive against A.benhamiae. Its function is as follows. Has antifungal activity against N.crassa, A.fumigatus, A.brassicicola, N.hematococca, F.culmorum, F.oxyporum, A.benhamiae, C.neoformans, as well as against yeasts C.albicans, and C.tropicalis. Seems to be inactive against C.glabrata. Interacts with the fungal cell wall, crosses the plasma membrane and accumulates in fungal cells where it inhibits calcineurin activity. In terms of biological role, regulates granule biogenesis in endocrine cells by up-regulating the transcription of protease nexin 1 (SERPINE2) via a cAMP-PKA-SP1 pathway. This leads to inhibition of granule protein degradation in the Golgi complex which in turn promotes granule formation. The polypeptide is Chromogranin-A (CHGA) (Bos taurus (Bovine)).